A 175-amino-acid polypeptide reads, in one-letter code: Inorganic pyrophosphatase (175 aa).

Substrate is bound by residues K30, R44, and Y56. 3 residues coordinate Mg(2+): D66, D71, and D103. Residue Y142 participates in substrate binding.

The protein belongs to the PPase family. Homohexamer. It depends on Mg(2+) as a cofactor.

The protein localises to the cytoplasm. The enzyme catalyses diphosphate + H2O = 2 phosphate + H(+). Its function is as follows. Catalyzes the hydrolysis of inorganic pyrophosphate (PPi) forming two phosphate ions. The chain is Inorganic pyrophosphatase from Haemophilus ducreyi (strain 35000HP / ATCC 700724).